The primary structure comprises 81 residues: Small ribosomal subunit protein bS16 (81 aa).

It belongs to the bacterial ribosomal protein bS16 family.

This Clostridium perfringens (strain ATCC 13124 / DSM 756 / JCM 1290 / NCIMB 6125 / NCTC 8237 / Type A) protein is Small ribosomal subunit protein bS16.